A 128-amino-acid polypeptide reads, in one-letter code: Cytochrome c-type biogenesis protein CcmE (128 aa).

The Cytoplasmic portion of the chain corresponds to 1–8 (MQKRVRNR). A helical; Signal-anchor for type II membrane protein membrane pass occupies residues 9–29 (LITIIICFCSAALGISIVLYN). Residues 30 to 128 (LEKNIVFFLP…KHDENYRPPS (99 aa)) lie on the Periplasmic side of the membrane. 2 residues coordinate heme: His120 and Tyr124.

Belongs to the CcmE/CycJ family.

The protein resides in the cell inner membrane. Functionally, heme chaperone required for the biogenesis of c-type cytochromes. Transiently binds heme delivered by CcmC and transfers the heme to apo-cytochromes in a process facilitated by CcmF and CcmH. The chain is Cytochrome c-type biogenesis protein CcmE from Rickettsia felis (strain ATCC VR-1525 / URRWXCal2) (Rickettsia azadi).